The chain runs to 399 residues: Argininosuccinate synthase (399 aa).

Ala8–Ser16 contributes to the ATP binding site. Position 87 (Tyr87) interacts with L-citrulline. Gly117 contacts ATP. Positions 119, 123, and 124 each coordinate L-aspartate. Residue Asn123 coordinates L-citrulline. 4 residues coordinate L-citrulline: Arg127, Ser175, Glu260, and Tyr272.

The protein belongs to the argininosuccinate synthase family. Type 1 subfamily. In terms of assembly, homotetramer.

It localises to the cytoplasm. It carries out the reaction L-citrulline + L-aspartate + ATP = 2-(N(omega)-L-arginino)succinate + AMP + diphosphate + H(+). The protein operates within amino-acid biosynthesis; L-arginine biosynthesis; L-arginine from L-ornithine and carbamoyl phosphate: step 2/3. The polypeptide is Argininosuccinate synthase (Rhodococcus jostii (strain RHA1)).